The following is a 299-amino-acid chain: MLDRSRLRIAIQKSGRLSKESQQLLEQCGIKINLQQQRLLAFAENMAIDIMRVRDDDIPGLVMDGIVDLGIIGENVLEEALLTRRSQGDNPCYIMLLRLDFGDCRLSMALPIDEPWNGPKSLQGKRIATSYPHLLKQYLDKLGIHFKSCLLNGSVEVAPRAGLADAICDLVSTGATLEANGLHEVEVIYRSKACLIQRSGELSNIKQSLINKLIIRIQGVIQARGSKYIMLHAPAEQLEEIINLLPGAESPTVLPLAGNQHRVAIYMVSNETLFWETMENLKNLGASSILVLPIEKMME.

It belongs to the ATP phosphoribosyltransferase family. Long subfamily. As to quaternary structure, equilibrium between an active dimeric form, an inactive hexameric form and higher aggregates. Interconversion between the various forms is largely reversible and is influenced by the natural substrates and inhibitors of the enzyme. Mg(2+) is required as a cofactor.

It localises to the cytoplasm. The catalysed reaction is 1-(5-phospho-beta-D-ribosyl)-ATP + diphosphate = 5-phospho-alpha-D-ribose 1-diphosphate + ATP. Its pathway is amino-acid biosynthesis; L-histidine biosynthesis; L-histidine from 5-phospho-alpha-D-ribose 1-diphosphate: step 1/9. With respect to regulation, feedback inhibited by histidine. Its function is as follows. Catalyzes the condensation of ATP and 5-phosphoribose 1-diphosphate to form N'-(5'-phosphoribosyl)-ATP (PR-ATP). Has a crucial role in the pathway because the rate of histidine biosynthesis seems to be controlled primarily by regulation of HisG enzymatic activity. The chain is ATP phosphoribosyltransferase from Blochmanniella pennsylvanica (strain BPEN).